Consider the following 301-residue polypeptide: Mitochondrial import receptor subunit TOM40 homolog (301 aa).

The span at Met1–Gly19 shows a compositional bias: polar residues. A disordered region spans residues Met1–Ser20.

Belongs to the Tom40 family. Forms part of the preprotein translocase complex of the outer mitochondrial membrane (TOM complex). Interacts with mitochondrial targeting sequences. As to expression, ubiquitously expressed, but highly expressed in the pharyngeal muscles, the nerve ring, the intestine, gonadal sheath and in the tail hypodermis.

The protein localises to the mitochondrion outer membrane. Channel-forming protein essential for import of protein precursors into mitochondria. Specifically required for nnt-1 accumulation in the mitochondria and may be involved in the secretion of daf-28/insulin from the mitochondria. Required for embryonic and larval development. This is Mitochondrial import receptor subunit TOM40 homolog from Caenorhabditis elegans.